The chain runs to 186 residues: Intraflagellar transport protein 27 homolog (186 aa).

Residues 12–19 (GDPAVGKT), 64–68 (DSAGK), and 123–126 (TKTD) contribute to the GTP site.

The protein belongs to the small GTPase superfamily. Rab family. In terms of assembly, component of the IFT complex B, at least composed of IFT20, IFT22, IFT25, IFT27, IFT46, IFT52, TRAF3IP1/IFT54, IFT57, IFT74, IFT80, IFT81, and IFT88. Interacts with IFT25. Interacts with IFT70B. Interacts with RABL2/RABL2A; binding is equal in the presence of GTP or GDP. Interacts with IFT88. Interacts with ARL6; recognizes and binds with the GTP-free form of ARL6. As to expression, expressed predominantly in the testis (at protein level). Co-localizes with RABL2/RABL2A in the midpiece of elongated spermatids within the testis (at protein level).

It is found in the cell projection. It localises to the cilium. Its subcellular location is the cytoplasm. The protein resides in the flagellum. Small GTPase-like component of the intraflagellar transport (IFT) complex B that promotes the exit of the BBSome complex from cilia via its interaction with ARL6. Not involved in entry of the BBSome complex into cilium. Prevents aggregation of GTP-free ARL6. Required for hedgehog signaling. Forms a subcomplex within the IFT complex B with IFT25. Its role in intraflagellar transport is mainly seen in tissues rich in ciliated cells such as kidney and testis. Essential for male fertility, spermiogenesis and sperm flagella formation. Plays a role in the early development of the kidney. May be involved in the regulation of ureteric bud initiation. This Mus musculus (Mouse) protein is Intraflagellar transport protein 27 homolog (Ift27).